A 347-amino-acid polypeptide reads, in one-letter code: D-alanine--D-alanine ligase (347 aa).

Positions 131–333 (KRVLESAGIA…YPELIERLVD (203 aa)) constitute an ATP-grasp domain. Residue 161-216 (EEKLAYPVFTKPSNMGSSVGISKSENQEELRQALKLAFRYDSRVLVEQGVNAREIE) coordinates ATP. Mg(2+)-binding residues include Asp287, Glu300, and Asn302.

Belongs to the D-alanine--D-alanine ligase family. Mg(2+) is required as a cofactor. Mn(2+) serves as cofactor.

The protein resides in the cytoplasm. It carries out the reaction 2 D-alanine + ATP = D-alanyl-D-alanine + ADP + phosphate + H(+). It participates in cell wall biogenesis; peptidoglycan biosynthesis. Its function is as follows. Cell wall formation. This is D-alanine--D-alanine ligase from Streptococcus pneumoniae (strain JJA).